A 754-amino-acid chain; its full sequence is ATP-dependent zinc metalloprotease FtsH (754 aa).

Topologically, residues 1-9 (MKQRMKKPS) are cytoplasmic. A helical transmembrane segment spans residues 10-30 (LGTFILILILIGILAYVLWQF). Over 31-186 (LSPKLGYKSL…FDRPRGNFLS (156 aa)) the chain is Extracellular. Residues 187–207 (SFIVPYIPFLLISLFGFWLFF) traverse the membrane as a helical segment. Topologically, residues 208–754 (RLSQNSQAGG…ESKIDSSKEQ (547 aa)) are cytoplasmic. 277 to 284 (GPPGTGKT) lines the ATP pocket. Residue His-499 participates in Zn(2+) binding. Glu-500 is a catalytic residue. Residues His-503 and Asp-577 each contribute to the Zn(2+) site. The disordered stretch occupies residues 713 to 754 (QEKSYENEDQNQNSLEAINYNIDDQDDDKNDSESKIDSSKEQ). Residues 743-754 (DSESKIDSSKEQ) are compositionally biased toward basic and acidic residues.

It in the central section; belongs to the AAA ATPase family. This sequence in the C-terminal section; belongs to the peptidase M41 family. In terms of assembly, homohexamer. Zn(2+) is required as a cofactor.

The protein resides in the cell membrane. Its function is as follows. Acts as a processive, ATP-dependent zinc metallopeptidase for both cytoplasmic and membrane proteins. Plays a role in the quality control of integral membrane proteins. This chain is ATP-dependent zinc metalloprotease FtsH, found in Mesomycoplasma conjunctivae (strain ATCC 25834 / NCTC 10147 / HRC/581) (Mycoplasma conjunctivae).